We begin with the raw amino-acid sequence, 145 residues long: UPF0201 protein SSO1042 (145 aa).

Belongs to the UPF0201 family.

The sequence is that of UPF0201 protein SSO1042 from Saccharolobus solfataricus (strain ATCC 35092 / DSM 1617 / JCM 11322 / P2) (Sulfolobus solfataricus).